A 356-amino-acid polypeptide reads, in one-letter code: sn-glycerol-3-phosphate import ATP-binding protein UgpC (356 aa).

The 232-residue stretch at 4–235 folds into the ABC transporter domain; that stretch reads LKLQAVTKSW…PASRFVASFI (232 aa). 37-44 is a binding site for ATP; it reads GPSGCGKS.

Belongs to the ABC transporter superfamily. sn-glycerol-3-phosphate importer (TC 3.A.1.1.3) family. In terms of assembly, the complex is composed of two ATP-binding proteins (UgpC), two transmembrane proteins (UgpA and UgpE) and a solute-binding protein (UgpB).

The protein resides in the cell inner membrane. It catalyses the reaction sn-glycerol 3-phosphate(out) + ATP + H2O = sn-glycerol 3-phosphate(in) + ADP + phosphate + H(+). Its function is as follows. Part of the ABC transporter complex UgpBAEC involved in sn-glycerol-3-phosphate (G3P) import. Responsible for energy coupling to the transport system. This chain is sn-glycerol-3-phosphate import ATP-binding protein UgpC, found in Salmonella typhimurium (strain LT2 / SGSC1412 / ATCC 700720).